Consider the following 524-residue polypeptide: CTP synthase (524 aa).

Positions 1–263 (MKKYVIVTGG…HEKIASKLNV (263 aa)) are amidoligase domain. A CTP-binding site is contributed by serine 13. Serine 13 is a UTP binding site. ATP is bound by residues 14–19 (GIGKGI) and aspartate 71. Residues aspartate 71 and glutamate 137 each contribute to the Mg(2+) site. CTP contacts are provided by residues 144–146 (DIE), 184–189 (KTKPTQ), and lysine 220. Residues 184–189 (KTKPTQ) and lysine 220 each bind UTP. Residues 282-524 (RIALVGKYLG…YLRKVLEGSQ (243 aa)) form the Glutamine amidotransferase type-1 domain. Glycine 342 is an L-glutamine binding site. Cysteine 369 functions as the Nucleophile; for glutamine hydrolysis in the catalytic mechanism. L-glutamine is bound by residues 370–373 (LGMQ), glutamate 393, and arginine 451. Catalysis depends on residues histidine 499 and glutamate 501.

The protein belongs to the CTP synthase family. As to quaternary structure, homotetramer.

It carries out the reaction UTP + L-glutamine + ATP + H2O = CTP + L-glutamate + ADP + phosphate + 2 H(+). The catalysed reaction is L-glutamine + H2O = L-glutamate + NH4(+). The enzyme catalyses UTP + NH4(+) + ATP = CTP + ADP + phosphate + 2 H(+). Its pathway is pyrimidine metabolism; CTP biosynthesis via de novo pathway; CTP from UDP: step 2/2. With respect to regulation, allosterically activated by GTP, when glutamine is the substrate; GTP has no effect on the reaction when ammonia is the substrate. The allosteric effector GTP functions by stabilizing the protein conformation that binds the tetrahedral intermediate(s) formed during glutamine hydrolysis. Inhibited by the product CTP, via allosteric rather than competitive inhibition. Its function is as follows. Catalyzes the ATP-dependent amination of UTP to CTP with either L-glutamine or ammonia as the source of nitrogen. Regulates intracellular CTP levels through interactions with the four ribonucleotide triphosphates. The chain is CTP synthase from Thermotoga maritima (strain ATCC 43589 / DSM 3109 / JCM 10099 / NBRC 100826 / MSB8).